The chain runs to 742 residues: MDAARDGRPERRPRRSGTYRTHPFQRPSARRSLLDALRAADAEAAERPRVRRPRPDFQRPPDEDTSEDENVYDYIDGDSSDSADDYDSDYFTANRGPNHGAGDAMDTDAPPERAPEGGAPQDYLTAHLRAIEALPESAPHRSLLERTARTVYAHEFPPRDLSAGSRAPAQRARRSLRGFPRGGGGGQEPGPDDEGDDAADLREDLVPDEAYAHLERDERLSEGPPLLNMEAAAAAAGERSVVEELFTYAPAQPQVEVPLPRILEGRVRPSAFFAQMPLDALCRTPPNDQRVVRERRAWDMAGTPHGLLITTWSTVDPEFSIGGMYVGAPEGTRPRLVWRRAMKQAMALQYRLGVGGLCRAVDGARMPPTEALLFLAARAAARSAQLPFFVAAGARGRRRAAPARGGGWAAGSHAVHATGRVPHATLFRGSMGSLIYWHELRVMLTAVPALCARYAGAGLQSAELYLLALRHSEAPGYTANERYALSAYLTLFVALAERAVRWLYLAGAHLLGPHPTAAAFREVRAKIPYERLPLGSATLHDAEVETVDSATFQEALAFSALAHVYGEAYVAVRTATTLLMAEYAAHAERRDVREMTAAFLGVGLIAQRLMGSLEPAAELRSRRSGVRGPACPTVREGTLARYSLLADAALPLVRPVSLVEFWEARDGVMRELRLRPVASPPLAGKRRVMELYLSLDSIEALVGREPLGSRPVLGPLVDIAEALADHPHLVTGDGRGPRLGGR.

A compositionally biased stretch (basic and acidic residues) spans 1 to 10; sequence MDAARDGRPE. 2 disordered regions span residues 1-128 and 155-199; these read MDAA…TAHL and EFPP…DDAA. Residues 10 to 30 carry the Nuclear localization signal motif; that stretch reads ERRPRRSGTYRTHPFQRPSAR. A compositionally biased stretch (low complexity) spans 18–37; it reads TYRTHPFQRPSARRSLLDAL. Over residues 38–62 the composition is skewed to basic and acidic residues; that stretch reads RAADAEAAERPRVRRPRPDFQRPPD. A compositionally biased stretch (acidic residues) spans 63 to 88; that stretch reads EDTSEDENVYDYIDGDSSDSADDYDS. Residues 95–122 carry the Nuclear export signal motif; that stretch reads RGPNHGAGDAMDTDAPPERAPEGGAPQD. The short motif at 485-495 is the Nuclear export signal element; the sequence is LSAYLTLFVAL.

Belongs to the alphaherpesvirinae HHV-1 UL47 family. As to quaternary structure, interacts with US3 kinase. Interacts with UL31 and UL34; these interactions seem important for efficient virion nuclear egress. Interacts with UL41/VHS. In terms of processing, phosphorylated by US3. This phosphorylation is required for proper nuclear localization.

It localises to the virion tegument. Its subcellular location is the host nucleus. It is found in the host cytoplasm. Functionally, tegument protein that can bind to various RNA transcripts. Plays a role in the attenuation of selective viral and cellular mRNA degradation by modulating the activity of host shutoff RNase UL41/VHS. Also plays a role in the primary envelopment of virions in the perinuclear space, probably by interacting with two nuclear egress proteins UL31 and UL34. This Bos taurus (Bovine) protein is Tegument protein UL47.